The sequence spans 176 residues: N-alpha-acetyltransferase 30 (176 aa).

The N-acetyltransferase domain occupies I3–T159.

It belongs to the acetyltransferase family. MAK3 subfamily. As to quaternary structure, component of the N-terminal acetyltransferase C (NatC) complex, which is composed of MAK3, MAK10 and MAK31.

Its subcellular location is the cytoplasm. The protein resides in the nucleus. It catalyses the reaction N-terminal L-methionyl-L-leucyl-[protein] + acetyl-CoA = N-terminal N(alpha)-acetyl-L-methionyl-L-leucyl-[protein] + CoA + H(+). The catalysed reaction is N-terminal L-methionyl-L-isoleucyl-[protein] + acetyl-CoA = N-terminal N(alpha)-acetyl-L-methionyl-L-isoleucyl-[protein] + CoA + H(+). It carries out the reaction N-terminal L-methionyl-L-phenylalanyl-[protein] + acetyl-CoA = N-terminal N(alpha)-acetyl-L-methionyl-L-phenylalanyl-[protein] + CoA + H(+). The enzyme catalyses N-terminal L-methionyl-L-tryptophyl-[protein] + acetyl-CoA = N-terminal N(alpha)-acetyl-L-methionyl-L-tryptophyl-[protein] + CoA + H(+). It catalyses the reaction N-terminal L-methionyl-L-tyrosyl-[protein] + acetyl-CoA = N-terminal N(alpha)-acetyl-L-methionyl-L-tyrosyl-[protein] + CoA + H(+). Its function is as follows. Catalytic component of the NatC N-terminal acetyltransferase, which catalyzes acetylation of the N-terminus Met of L-A virus GAG protein and possibly GRH1. This chain is N-alpha-acetyltransferase 30 (MAK3), found in Saccharomyces cerevisiae (strain ATCC 204508 / S288c) (Baker's yeast).